Reading from the N-terminus, the 162-residue chain is NADH-quinone oxidoreductase subunit I (162 aa).

4Fe-4S ferredoxin-type domains lie at 52–82 (LRRY…IEAG) and 93–122 (VRYD…EGPN). [4Fe-4S] cluster contacts are provided by Cys-62, Cys-65, Cys-68, Cys-72, Cys-102, Cys-105, Cys-108, and Cys-112.

The protein belongs to the complex I 23 kDa subunit family. NDH-1 is composed of 14 different subunits. Subunits NuoA, H, J, K, L, M, N constitute the membrane sector of the complex. Requires [4Fe-4S] cluster as cofactor.

It localises to the cell inner membrane. It carries out the reaction a quinone + NADH + 5 H(+)(in) = a quinol + NAD(+) + 4 H(+)(out). NDH-1 shuttles electrons from NADH, via FMN and iron-sulfur (Fe-S) centers, to quinones in the respiratory chain. The immediate electron acceptor for the enzyme in this species is believed to be ubiquinone. Couples the redox reaction to proton translocation (for every two electrons transferred, four hydrogen ions are translocated across the cytoplasmic membrane), and thus conserves the redox energy in a proton gradient. This chain is NADH-quinone oxidoreductase subunit I, found in Bradyrhizobium sp. (strain ORS 278).